We begin with the raw amino-acid sequence, 336 residues long: MLQSLAGSSCVRLVERHRSAWCFGFLVLGYLLYLVFGAVVFSSVELPYEDLLRQELRKLKRRFLEEHECLSEQQLEQFLGRVLEASNYGVSVLSNASGNWNWDFTSALFFASTVLSTTGYGHTVPLSDGGKAFCIIYSVIGIPFTLLFLTAVVQRITVHVTRRPVLYFHIRWGFSKQVVAIVHAVLLGFVTVSCFFFIPAAVFSVLEDDWNFLESFYFCFISLSTIGLGDYVPGEGYNQKFRELYKIGITCYLLLGLIAMLVVLETFCELHELKKFRKMFYVKKDKDEDQVHIIEHDQLSFSSITDQAAGMKEDQKQNEPFVATQSSACVDGPANH.

Residues methionine 1–alanine 20 are Cytoplasmic-facing. A helical transmembrane segment spans residues tryptophan 21–phenylalanine 41. Over serine 42–aspartate 103 the chain is Extracellular. An N-linked (GlcNAc...) asparagine glycan is attached at asparagine 95. Residues phenylalanine 104 to serine 116 constitute an intramembrane region (helical). Residues threonine 117–histidine 122 lie within the membrane without spanning it. The segment at threonine 117–histidine 122 is selectivity filter 1. The Extracellular segment spans residues threonine 123–alanine 132. The helical transmembrane segment at phenylalanine 133–isoleucine 156 threads the bilayer. Topologically, residues threonine 157–isoleucine 181 are cytoplasmic. A helical transmembrane segment spans residues valine 182–valine 202. Over phenylalanine 203–asparagine 211 the chain is Extracellular. Positions phenylalanine 212 to serine 224 form an intramembrane region, helical. The selectivity filter 2 stretch occupies residues threonine 225–aspartate 230. The stretch at threonine 225–tyrosine 231 is an intramembrane region. The Extracellular portion of the chain corresponds to valine 232–glutamate 243. A helical membrane pass occupies residues leucine 244–phenylalanine 267. At cysteine 268–histidine 336 the chain is on the cytoplasmic side. Lysine 274 is covalently cross-linked (Glycyl lysine isopeptide (Lys-Gly) (interchain with G-Cter in SUMO)). The important for intracellular retention in recycling endosomes stretch occupies residues isoleucine 293–leucine 299. Serine 326 is modified (phosphoserine).

It belongs to the two pore domain potassium channel (TC 1.A.1.8) family. As to quaternary structure, homodimer; disulfide-linked. Heterodimer with KCNK2; disulfide-linked. In astrocytes, forms mostly heterodimeric potassium channels with KCNK2, with only a minor proportion of functional channels containing homodimeric KCNK1. Interacts with KCNK3 and KCNK9, forming functional heterodimeric channels. Interacts with GNG4. Identified in a complex with PSD and ARF6; interacts only with PSD that is bound to ARF6. Interacts with UBE2I. In terms of processing, sumoylation is controversial. Sumoylated by UBE2I. Not sumoylated when expressed in xenopus oocytes or mammalian cells. Sumoylation inactivates the channel, but does not interfere with expression at the cell membrane. Sumoylation of a single subunit is sufficient to silence the dimeric channel. Sumoylation of KCNK1 is sufficient to silence heterodimeric channels formed by KCNK1 and KCNK3 or KCNK9. Desumoylated by SENP1; this activates the channel. Desumoylated by SENP1; this strongly increases halothane-mediated activation of heterodimeric channels formed with KCNK9. SENP1 treatment has no effect. As to expression, detected in bronchial epithelial cells. Detected in heart left atrium and left ventricle. Detected in cardiac myocytes (at protein level). Widely expressed with high levels in heart, brain and kidney, and lower levels in colon, ovary, placenta, lung and liver. Highly expressed in cerebellum, and detected at lower levels in amygdala, caudate nucleus, brain cortex, hippocampus, putamen, substantia nigra, thalamus, dorsal root ganglion, spinal cord, pituitary, heart, kidney, lung, placenta, pancreas, stomach, small intestine, uterus and prostate. Detected in right and left heart ventricle and atrium, and in heart Purkinje fibers.

It localises to the cell membrane. The protein localises to the recycling endosome. It is found in the synaptic cell membrane. The protein resides in the cytoplasmic vesicle. Its subcellular location is the perikaryon. It localises to the cell projection. The protein localises to the dendrite. It is found in the apical cell membrane. It carries out the reaction K(+)(in) = K(+)(out). It catalyses the reaction NH4(+)(in) = NH4(+)(out). The catalysed reaction is Na(+)(in) = Na(+)(out). The enzyme catalyses Rb(+)(in) = Rb(+)(out). It carries out the reaction Cs(+)(in) = Cs(+)(out). It catalyses the reaction Li(+)(in) = Li(+)(out). The catalysed reaction is L-glutamate(out) = L-glutamate(in). The enzyme catalyses chloride(in) = chloride(out). With respect to regulation, inhibited by Ba(2+) ions and quinidine. Inhibited by quinine. Is slightly inhibited by 10 mM tetraethylammonium (TEA), and only marginally inhibited by 4-aminopyridine, charybdotoxin and dendrotoxin. Lowering the extracellular pH to below 6.5 transiently activates the channel, and then inhibits channel activity. Inhibited when the intracellular pH is decreased down to pH 6.0, but this may be due to indirect effects. Functionally, ion channel that contributes to passive transmembrane potassium transport and to the regulation of the resting membrane potential in brain astrocytes, but also in kidney and in other tissues. Forms dimeric channels through which potassium ions pass in accordance with their electrochemical gradient. The channel is selective for K(+) ions at physiological potassium concentrations and at neutral pH, but becomes permeable to Na(+) at subphysiological K(+) levels and upon acidification of the extracellular medium. The homodimer has very low potassium channel activity, when expressed in heterologous systems, and can function as weakly inward rectifying potassium channel. Channel activity is modulated by activation of serotonin receptors. Heterodimeric channels containing KCNK1 and KCNK2 have much higher activity, and may represent the predominant form in astrocytes. Heterodimeric channels containing KCNK1 and KCNK3 or KCNK9 have much higher activity. Heterodimeric channels formed by KCNK1 and KCNK9 may contribute to halothane-sensitive currents. Mediates outward rectifying potassium currents in dentate gyrus granule cells and contributes to the regulation of their resting membrane potential. Contributes to the regulation of action potential firing in dentate gyrus granule cells and down-regulates their intrinsic excitability. In astrocytes, the heterodimer formed by KCNK1 and KCNK2 is required for rapid glutamate release in response to activation of G-protein coupled receptors, such as F2R and CNR1. Required for normal ion and water transport in the kidney. Contributes to the regulation of the resting membrane potential of pancreatic beta cells. The low channel activity of homodimeric KCNK1 may be due to sumoylation. The low channel activity may be due to rapid internalization from the cell membrane and retention in recycling endosomes. Permeable to monovalent cations with ion selectivity for K(+) &gt; Rb(+) &gt;&gt; NH4(+) &gt;&gt; Cs(+) = Na(+) = Li(+). The protein is Potassium channel subfamily K member 1 (KCNK1) of Homo sapiens (Human).